The sequence spans 1414 residues: Protein KATNIP homolog (1414 aa).

Disordered stretches follow at residues 1 to 32 (MHGK…DEKH), 80 to 116 (QQST…PGKI), 139 to 158 (GPNT…NEDQ), 712 to 731 (VSAT…NDLT), 756 to 783 (SSSS…TFTN), 823 to 861 (KMDN…SEKY), and 924 to 943 (QQQK…SLMP). Basic and acidic residues-rich tracts occupy residues 10–32 (RKND…DEKH) and 86–101 (LARE…DDGC). Acidic residues predominate over residues 147–158 (DFESDDDMNEDQ). Polar residues-rich tracts occupy residues 832–843 (NFSNQSSYNSDR) and 924–940 (QQQK…NGSS).

The protein resides in the cytoplasm. It is found in the cytoskeleton. It localises to the cilium axoneme. Its subcellular location is the cilium basal body. In terms of biological role, may control cilium integrity. This is Protein KATNIP homolog from Xenopus laevis (African clawed frog).